The following is a 124-amino-acid chain: Bactoprenol-linked glucose translocase (124 aa).

4 consecutive transmembrane segments (helical) span residues 12–32 (FFSY…VFYA), 45–65 (NIVG…RCSF), 75–95 (FIFI…FDLL), and 96–116 (ALSP…LGYC).

This sequence belongs to the GtrA family.

Its subcellular location is the cell membrane. It functions in the pathway bacterial outer membrane biogenesis; lipopolysaccharide biosynthesis. Its function is as follows. Involved in O antigen modification. Involved in the translocation of bactoprenol-linked glucose across the cytoplasmic membrane. The sequence is that of Bactoprenol-linked glucose translocase (rfbI) from Shigella flexneri.